Here is a 307-residue protein sequence, read N- to C-terminus: MKWERKDILGMKDLSVEEIHMILDTAESFLEVSARDIKKVPTLRGKTIINFFVEASTRTRTSFEIAGKRLSADTINISASASSLVKGETLADTARNLEAMNPDVIVIRHSCAGAPHMLAGLVRQSIINAGDGAHEHPSQALLDMMTIRNRKGGLSGLNVTIVGDIAHSRVARSNIYGLNKMGVCVTVAGPATMIPRDIQQLGVKVCFSLEEAILDADVIMMLRIQTEREQQNIFPSLREYSTFYCLNRENIKKAKKDVLVMHPGPVNRGVEISPEIADGVHSVILEQVTNGVAVRMALLYLLTGASS.

The carbamoyl phosphate site is built by arginine 58 and threonine 59. Lysine 86 contacts L-aspartate. Arginine 108, histidine 136, and glutamine 139 together coordinate carbamoyl phosphate. L-aspartate contacts are provided by arginine 169 and arginine 223. Carbamoyl phosphate-binding residues include glycine 264 and proline 265.

It belongs to the aspartate/ornithine carbamoyltransferase superfamily. ATCase family. Heterododecamer (2C3:3R2) of six catalytic PyrB chains organized as two trimers (C3), and six regulatory PyrI chains organized as three dimers (R2).

The enzyme catalyses carbamoyl phosphate + L-aspartate = N-carbamoyl-L-aspartate + phosphate + H(+). It participates in pyrimidine metabolism; UMP biosynthesis via de novo pathway; (S)-dihydroorotate from bicarbonate: step 2/3. Its function is as follows. Catalyzes the condensation of carbamoyl phosphate and aspartate to form carbamoyl aspartate and inorganic phosphate, the committed step in the de novo pyrimidine nucleotide biosynthesis pathway. This is Aspartate carbamoyltransferase catalytic subunit from Syntrophus aciditrophicus (strain SB).